Here is a 76-residue protein sequence, read N- to C-terminus: Dermaseptin-S7 (76 aa).

Residues 1 to 22 form the signal peptide; sequence MDILKKSLFLVLFLGLISLSFC. Positions 23–45 are excised as a propeptide; that stretch reads EEEKRENEDEEEQEDDEQSEEKR. A disordered region spans residues 25-45; that stretch reads EKRENEDEEEQEDDEQSEEKR. Acidic residues predominate over residues 30-41; that stretch reads EDEEEQEDDEQS. Gln73 carries the post-translational modification Glutamine amide. A propeptide spanning residues 75 to 76 is cleaved from the precursor; the sequence is EQ.

It belongs to the frog skin active peptide (FSAP) family. Dermaseptin subfamily. As to expression, expressed by the skin glands.

It localises to the secreted. Functionally, antimicrobial peptide. In Phyllomedusa sauvagei (Sauvage's leaf frog), this protein is Dermaseptin-S7.